The primary structure comprises 207 residues: Ankyrin repeat-containing protein P1E11.10 (207 aa).

ANK repeat units follow at residues 36–65 (NGYTPIHAAVSYGHSDLLKILVERGGDINI) and 69–98 (DGETPLFVCEKLEIAHDLINQYNADTTVKN).

The protein localises to the cytoplasm. It is found in the nucleus. This chain is Ankyrin repeat-containing protein P1E11.10, found in Schizosaccharomyces pombe (strain 972 / ATCC 24843) (Fission yeast).